Consider the following 997-residue polypeptide: Synaptonemal complex protein 1 (997 aa).

Positions 102 to 112 (PMSRLYSKLYK) match the Mediates head to head self-assembly of N-terminal ends motif. The short motif at 118–121 (KKWK) is the Nuclear localization signal element. Coiled-coil stretches lie at residues 121–176 (KVSI…LIKE) and 212–696 (YVDL…KKIS). Positions 207–363 (ETRQVYVDLN…YQLTEEKEAQ (157 aa)) are interaction with SYCE3. Residues 698–792 (EKLLGEVEKA…VSLKKQLEVE (95 aa)) are required for pH-induced assembly of C-terminal ends into antiparallel tetramers. Residues 701 to 704 (LGEV) carry the Nuclear localization signal motif. Residues 768–806 (KVALETELSNIRNELVSLKKQLEVEKEEKEKLKMEQENT) are a coiled coil. Residues 805-997 (NTAILTDKKD…RLKEAEKLFT (193 aa)) are DNA-binding. Residue serine 824 is modified to Phosphoserine. The tract at residues 828-863 (TSWKFDSKTTPSQNISRLSSSMDSGKSKDNRDSLRA) is disordered. Over residues 835–851 (KTTPSQNISRLSSSMDS) the composition is skewed to polar residues. Residues 852-861 (GKSKDNRDSL) are compositionally biased toward basic and acidic residues. The Nuclear localization signal motif lies at 902–905 (KKRK). Threonine 940 carries the phosphothreonine modification.

Structural component of synaptonemal complexes. Homotetramer that consists of an N-terminal four-helical bundle that bifurcates into two elongated C-terminal dimeric coiled coils. This tetrameric building block potentially self-assembles into a supramolecular zipper-like lattice to mediate meiotic chromosome synapsis. Self-assembly is likely initiated by local proton density at chromosome axis, which is predicted to trigger antiparallel back to back assembly of adjacent C-terminal ends into tetrameric structures that anchor to chromosomal DNA. Then the N-terminal ends are predicted to undergo cooperative antiparallel head to head assembly at the midline of synaptonemal complexes central element to form a zipper-like lattice between properly aligned homologous chromosomes. The nascent synapsis generated by SYCP1 is stabilized through interaction with central element proteins SYCE1 and SYCE2. Interacts (via tetrameric core) with SYCE3; the interaction remodels SYCP1 homotetramers to 2:1 heterotrimers with SYCE3. SYCP1/SYCE3 heterotrimers form lattice assemblies as part of the mature synaptonemal complex via both lateral and head-to-head interactions. Forms a complex with EWSR1, PRDM9, SYCP3 and REC8; complex formation is dependent of phosphorylated form of REC8 and requires PRDM9 bound to hotspot DNA; EWSR1 joins PRDM9 with the chromosomal axis through REC8. Interacts with SPO16. As to expression, testis.

It localises to the nucleus. Its subcellular location is the chromosome. It is found in the centromere. Major component of the transverse filaments of synaptonemal complexes, formed between homologous chromosomes during meiotic prophase. Required for normal assembly of the central element of the synaptonemal complexes. Required for normal centromere pairing during meiosis. Required for normal meiotic chromosome synapsis during oocyte and spermatocyte development and for normal male and female fertility. The protein is Synaptonemal complex protein 1 of Rattus norvegicus (Rat).